A 132-amino-acid chain; its full sequence is Agouti-related protein (132 aa).

The signal sequence occupies residues 1 to 20 (MLTAAVLSCALLLALPATRG). Residues 21 to 82 (AQMGLAPMEG…VLDLQDREPR (62 aa)) constitute a propeptide that is removed on maturation. Cystine bridges form between C87-C102, C94-C108, C101-C119, C105-C129, and C110-C117. Residues 87–129 (CVRLHESCLGQQVPCCDPCATCYCRFFNAFCYCRKLGTAMNPC) form the Agouti domain. Positions 111 to 113 (RFF) are interaction with melanocortin receptors.

As to quaternary structure, interacts with melanocortin receptors MC3R, MC4R and MC5R. In terms of tissue distribution, expressed primarily in the adrenal gland, subthalamic nucleus, and hypothalamus, with a lower level of expression occurring in testis, lung, and kidney.

It localises to the secreted. The protein localises to the golgi apparatus lumen. Functionally, plays a role in weight homeostasis. Involved in the control of feeding behavior through the central melanocortin system. Acts as alpha melanocyte-stimulating hormone antagonist by inhibiting cAMP production mediated by stimulation of melanocortin receptors within the hypothalamus and adrenal gland. Has very low activity with MC5R. Is an inverse agonist for MC3R and MC4R being able to suppress their constitutive activity. It promotes MC3R and MC4R endocytosis in an arrestin-dependent manner. The sequence is that of Agouti-related protein (AGRP) from Homo sapiens (Human).